We begin with the raw amino-acid sequence, 382 residues long: Homoserine O-succinyltransferase (382 aa).

In terms of domain architecture, AB hydrolase-1 spans 51–359 (NAILVCHALS…EATQGHDAFL (309 aa)). The active-site Nucleophile is serine 157. Residue arginine 227 coordinates substrate. Active-site residues include aspartate 322 and histidine 355. Aspartate 356 is a binding site for substrate.

It belongs to the AB hydrolase superfamily. MetX family. Homodimer.

Its subcellular location is the cytoplasm. It carries out the reaction L-homoserine + succinyl-CoA = O-succinyl-L-homoserine + CoA. It participates in amino-acid biosynthesis; L-methionine biosynthesis via de novo pathway; O-succinyl-L-homoserine from L-homoserine: step 1/1. Its function is as follows. Transfers a succinyl group from succinyl-CoA to L-homoserine, forming succinyl-L-homoserine. The sequence is that of Homoserine O-succinyltransferase from Halorhodospira halophila (strain DSM 244 / SL1) (Ectothiorhodospira halophila (strain DSM 244 / SL1)).